A 196-amino-acid chain; its full sequence is CASP-like protein 2A2 (196 aa).

The Cytoplasmic segment spans residues 1–26; it reads MAQGKESVSVVEMEGSGNGPAVEMRH. Residues 27-47 traverse the membrane as a helical segment; it reads FETLFRLLPVGLCISALVLML. At 48–68 the chain is on the extracellular side; it reads KSEQSDQYMQLDYSNVDAFRC. A helical membrane pass occupies residues 69 to 89; that stretch reads LAYANGICAGYSLISAFDSMV. Over 90–98 the chain is Cytoplasmic; that stretch reads PVSHHISRS. Residues 99–119 form a helical membrane-spanning segment; that stretch reads WILFLLDQGITYLMLAGGAVA. Over 120–148 the chain is Extracellular; sequence TQVLYVAYKGDEKATWEQICGSYGRFCNR. A helical transmembrane segment spans residues 149-169; the sequence is AGASVIISFFALVCFLLLSLL. Residues 170–196 lie on the Cytoplasmic side of the membrane; that stretch reads SAYRLFSKYDPPIHGGAKLEDQTTAQI.

It belongs to the Casparian strip membrane proteins (CASP) family. In terms of assembly, homodimer and heterodimers.

It localises to the cell membrane. In Picea sitchensis (Sitka spruce), this protein is CASP-like protein 2A2.